Consider the following 443-residue polypeptide: Proline--tRNA ligase (443 aa).

This sequence belongs to the class-II aminoacyl-tRNA synthetase family. ProS type 2 subfamily. In terms of assembly, homodimer.

It localises to the cytoplasm. The enzyme catalyses tRNA(Pro) + L-proline + ATP = L-prolyl-tRNA(Pro) + AMP + diphosphate. Functionally, catalyzes the attachment of proline to tRNA(Pro) in a two-step reaction: proline is first activated by ATP to form Pro-AMP and then transferred to the acceptor end of tRNA(Pro). This chain is Proline--tRNA ligase, found in Methylobacterium nodulans (strain LMG 21967 / CNCM I-2342 / ORS 2060).